The chain runs to 324 residues: Proto-oncogene Mas (324 aa).

Residues 1–35 (MDQSNMTSFAEEKAMNTSSRNASLGTSHPPIPIVH) are Extracellular-facing. N-linked (GlcNAc...) asparagine glycosylation is found at asparagine 5, asparagine 16, and asparagine 21. Residues 36-60 (WVIMSISPLGFVENGILLWFLCFRM) traverse the membrane as a helical segment. The Cytoplasmic segment spans residues 61-64 (RRNP). A helical membrane pass occupies residues 65–86 (FTVYITHLSIADISLLFCIFIL). Over 87–103 (SIDYALDYELSSGHYYT) the chain is Extracellular. A helical membrane pass occupies residues 104 to 127 (IVTLSVTFLFGYNTGLYLLTAISV). Residues 128–148 (ERCLSVLYPIWYRCHRPKHQS) lie on the Cytoplasmic side of the membrane. The helical transmembrane segment at 149–171 (AFVCALLWALSCLVTTMEYVMCI) threads the bilayer. Residues 172–184 (DSGEESHSQSDCR) are Extracellular-facing. The helical transmembrane segment at 185–205 (AVIIFIAILSFLVFTPLMLVS) threads the bilayer. The Cytoplasmic segment spans residues 206–223 (STILVVKIRKNTWASHSS). A helical membrane pass occupies residues 224 to 244 (KLYIVIMVTIIIFLIFAMPMR). At 245–262 (VLYLLYYEYWSTFGNLHN) the chain is on the extracellular side. A helical transmembrane segment spans residues 263–283 (ISLLFSTINSSANPFIYFFVG). Residues 284 to 324 (SSKKKRFRESLKVVLTRAFKDEMQPRRQEGNGNTVSIETVV) are Cytoplasmic-facing.

The protein belongs to the G-protein coupled receptor 1 family. As to quaternary structure, interacts with AGTR1. Interacts with FLNA (via filamin repeat 21); increases PKA-mediated phosphorylation of FLNA. As to expression, expressed in platelets.

The protein resides in the cell membrane. In terms of biological role, receptor for angiotensin 1-7. Acts specifically as a functional antagonist of AGTR1 (angiotensin-2 type 1 receptor), although it up-regulates AGTR1 receptor levels. Positive regulation of AGTR1 levels occurs through activation of the G-proteins GNA11 and GNAQ, and stimulation of the protein kinase C signaling cascade. The antagonist effect on AGTR1 function is probably due to AGTR1 being physically altered by MAS1. The chain is Proto-oncogene Mas (Mas1) from Rattus norvegicus (Rat).